A 344-amino-acid polypeptide reads, in one-letter code: GTP 3',8-cyclase (344 aa).

One can recognise a Radical SAM core domain in the interval 19–245; that stretch reads PFGRAVTYLR…DIPYRTGGPA (227 aa). Residue Arg-28 coordinates GTP. 2 residues coordinate [4Fe-4S] cluster: Cys-35 and Cys-39. S-adenosyl-L-methionine is bound at residue Tyr-41. A [4Fe-4S] cluster-binding site is contributed by Cys-42. Arg-77 serves as a coordination point for GTP. Gly-81 serves as a coordination point for S-adenosyl-L-methionine. Thr-111 provides a ligand contact to GTP. Ser-135 provides a ligand contact to S-adenosyl-L-methionine. Residue Lys-171 participates in GTP binding. Met-205 serves as a coordination point for S-adenosyl-L-methionine. [4Fe-4S] cluster is bound by residues Cys-268 and Cys-271. 273–275 provides a ligand contact to GTP; it reads RVR. Cys-285 contributes to the [4Fe-4S] cluster binding site.

The protein belongs to the radical SAM superfamily. MoaA family. Monomer and homodimer. Requires [4Fe-4S] cluster as cofactor.

It carries out the reaction GTP + AH2 + S-adenosyl-L-methionine = (8S)-3',8-cyclo-7,8-dihydroguanosine 5'-triphosphate + 5'-deoxyadenosine + L-methionine + A + H(+). Its pathway is cofactor biosynthesis; molybdopterin biosynthesis. Functionally, catalyzes the cyclization of GTP to (8S)-3',8-cyclo-7,8-dihydroguanosine 5'-triphosphate. The sequence is that of GTP 3',8-cyclase from Brucella canis (strain ATCC 23365 / NCTC 10854 / RM-666).